We begin with the raw amino-acid sequence, 479 residues long: Calcium uniporter protein, mitochondrial (479 aa).

Residues Met1 to Arg54 constitute a mitochondrion transit peptide. Over Gln55–Arg323 the chain is Mitochondrial matrix. Disordered stretches follow at residues Glu56–Leu125 and Glu206–Pro238. Positions Ala59 to Arg79 form a coiled coil. A compositionally biased stretch (basic and acidic residues) spans Glu60 to Arg75. Over residues Asn83–Leu93 the composition is skewed to polar residues. Composition is skewed to basic and acidic residues over residues Glu94–Lys122 and Glu206–Asn224. Residues Leu324–Phe344 form a helical membrane-spanning segment. Residues His345 to Glu354 are Mitochondrial intermembrane-facing. Positions Trp350 to Tyr358 match the Selectivity filter motif. Position 354 (Glu354) interacts with Ca(2+). Residues Pro355–Ile375 form a helical membrane-spanning segment. The Mitochondrial matrix portion of the chain corresponds to Ser376–Gln479. Residues Lys445–Gly462 show a composition bias toward basic and acidic residues. Residues Lys445–Gln479 form a disordered region.

It belongs to the MCU (TC 1.A.77) family. Homotetramer, assembles in a dimer or dimers configuration with two interfaces.

The protein resides in the mitochondrion inner membrane. It catalyses the reaction Ca(2+)(in) = Ca(2+)(out). Its function is as follows. Highly selective calcium channel localized to the inner mitochondrial membrane, which mediates calcium uptake into the mitochondrial matrix. Mitochondrial calcium homeostasis plays key roles in cellular physiology and regulates ATP production, cytoplasmic calcium signals and activation of cell death pathways. Sufficient to operate as a pore-forming channel without the need of calcium-sensor or auxiliary subunit. This chain is Calcium uniporter protein, mitochondrial, found in Gibberella zeae (strain ATCC MYA-4620 / CBS 123657 / FGSC 9075 / NRRL 31084 / PH-1) (Wheat head blight fungus).